The following is a 154-amino-acid chain: Probable transcription factor At4g00232 (154 aa).

Residues 1–44 (MDKANTNRSKVCGGSGEAKLTGKKRKNVSAKQSKKDAKKENSQM) are disordered.

This sequence belongs to the GeBP family.

The protein is Probable transcription factor At4g00232 of Arabidopsis thaliana (Mouse-ear cress).